A 413-amino-acid polypeptide reads, in one-letter code: MKSQLSLKDPKIFELIEQEKKRQKENIILIASENFVSKEVLETQGSILTNKYAEGYPGKRYYHGCGNVDDIEQIAIERAKKLFNARYANVQPHSGSQANMAVLQALLQPNDKILSLSLNDGGHLTHGHKLSFSGKYYQSYSYNVDPTTEMLDYESIRKLALEIKPKLIIAGYSAYSRKINFQKFREIANEVNAYLMADIAHIAGFVACKLHPCPLEAQADIVTSTTHKTLRGPRGGLILTNKEKIMQQINRSVFPGIQGGPLMHVIAAKAVSFKEAQSLEFKNYQQQVIKNAQAFAQTFQKKGYHVVSQGTDNHLFLINLKKTNPLFTGEKIANILEKVNIIVNKNTIPFDQEKPMFTSGIRLGTPAMTTKGFQEADFIKLADLIDQAIKNRDDNVYLQKIKKEVLDWTNDFK.

Residues leucine 118 and 122–124 (GHL) contribute to the (6S)-5,6,7,8-tetrahydrofolate site. Lysine 228 is modified (N6-(pyridoxal phosphate)lysine).

The protein belongs to the SHMT family. In terms of assembly, homodimer. Pyridoxal 5'-phosphate is required as a cofactor.

Its subcellular location is the cytoplasm. The enzyme catalyses (6R)-5,10-methylene-5,6,7,8-tetrahydrofolate + glycine + H2O = (6S)-5,6,7,8-tetrahydrofolate + L-serine. The protein operates within one-carbon metabolism; tetrahydrofolate interconversion. It participates in amino-acid biosynthesis; glycine biosynthesis; glycine from L-serine: step 1/1. Catalyzes the reversible interconversion of serine and glycine with tetrahydrofolate (THF) serving as the one-carbon carrier. This reaction serves as the major source of one-carbon groups required for the biosynthesis of purines, thymidylate, methionine, and other important biomolecules. Also exhibits THF-independent aldolase activity toward beta-hydroxyamino acids, producing glycine and aldehydes, via a retro-aldol mechanism. The polypeptide is Serine hydroxymethyltransferase (Phytoplasma australiense).